We begin with the raw amino-acid sequence, 267 residues long: 4-hydroxy-tetrahydrodipicolinate reductase (267 aa).

Residues 8-13 (GAAGRM) and E34 contribute to the NAD(+) site. R35 serves as a coordination point for NADP(+). NAD(+) contacts are provided by residues 98 to 100 (GST) and 122 to 125 (APNM). Residue H155 is the Proton donor/acceptor of the active site. Position 156 (H156) interacts with (S)-2,3,4,5-tetrahydrodipicolinate. The Proton donor role is filled by K159. 165–166 (GT) provides a ligand contact to (S)-2,3,4,5-tetrahydrodipicolinate.

It belongs to the DapB family.

The protein resides in the cytoplasm. It catalyses the reaction (S)-2,3,4,5-tetrahydrodipicolinate + NAD(+) + H2O = (2S,4S)-4-hydroxy-2,3,4,5-tetrahydrodipicolinate + NADH + H(+). It carries out the reaction (S)-2,3,4,5-tetrahydrodipicolinate + NADP(+) + H2O = (2S,4S)-4-hydroxy-2,3,4,5-tetrahydrodipicolinate + NADPH + H(+). It functions in the pathway amino-acid biosynthesis; L-lysine biosynthesis via DAP pathway; (S)-tetrahydrodipicolinate from L-aspartate: step 4/4. In terms of biological role, catalyzes the conversion of 4-hydroxy-tetrahydrodipicolinate (HTPA) to tetrahydrodipicolinate. The polypeptide is 4-hydroxy-tetrahydrodipicolinate reductase (Pelobacter propionicus (strain DSM 2379 / NBRC 103807 / OttBd1)).